The sequence spans 270 residues: UPF0354 protein BPUM_2629 (270 aa).

It belongs to the UPF0354 family.

The protein is UPF0354 protein BPUM_2629 of Bacillus pumilus (strain SAFR-032).